Consider the following 403-residue polypeptide: 4-hydroxy-3-methylbut-2-en-1-yl diphosphate synthase (ferredoxin) (403 aa).

Cys312, Cys315, Cys346, and Glu353 together coordinate [4Fe-4S] cluster.

This sequence belongs to the IspG family. The cofactor is [4Fe-4S] cluster.

It carries out the reaction (2E)-4-hydroxy-3-methylbut-2-enyl diphosphate + 2 oxidized [2Fe-2S]-[ferredoxin] + H2O = 2-C-methyl-D-erythritol 2,4-cyclic diphosphate + 2 reduced [2Fe-2S]-[ferredoxin] + H(+). It functions in the pathway isoprenoid biosynthesis; isopentenyl diphosphate biosynthesis via DXP pathway; isopentenyl diphosphate from 1-deoxy-D-xylulose 5-phosphate: step 5/6. In terms of biological role, converts 2C-methyl-D-erythritol 2,4-cyclodiphosphate (ME-2,4cPP) into 1-hydroxy-2-methyl-2-(E)-butenyl 4-diphosphate. The protein is 4-hydroxy-3-methylbut-2-en-1-yl diphosphate synthase (ferredoxin) of Synechocystis sp. (strain ATCC 27184 / PCC 6803 / Kazusa).